The sequence spans 266 residues: UPF0328 protein ECU03_0130 (266 aa).

Belongs to the UPF0328 family.

The polypeptide is UPF0328 protein ECU03_0130 (Encephalitozoon cuniculi (strain GB-M1) (Microsporidian parasite)).